Here is a 508-residue protein sequence, read N- to C-terminus: ATP synthase subunit alpha, chloroplastic (508 aa).

Residue 171–178 (GDRQTGKT) participates in ATP binding.

This sequence belongs to the ATPase alpha/beta chains family. In terms of assembly, F-type ATPases have 2 components, CF(1) - the catalytic core - and CF(0) - the membrane proton channel. CF(1) has five subunits: alpha(3), beta(3), gamma(1), delta(1), epsilon(1). CF(0) has four main subunits: a, b, b' and c.

It localises to the plastid. It is found in the chloroplast thylakoid membrane. It catalyses the reaction ATP + H2O + 4 H(+)(in) = ADP + phosphate + 5 H(+)(out). Produces ATP from ADP in the presence of a proton gradient across the membrane. The alpha chain is a regulatory subunit. The chain is ATP synthase subunit alpha, chloroplastic from Gnetum parvifolium (Small-leaved jointfir).